The primary structure comprises 456 residues: tRNA modification GTPase MnmE (456 aa).

(6S)-5-formyl-5,6,7,8-tetrahydrofolate contacts are provided by arginine 24, glutamate 81, and lysine 120. The TrmE-type G domain occupies 216 to 379 (GMTVVIAGRP…LRDHLKACMG (164 aa)). Asparagine 226 contributes to the K(+) binding site. GTP contacts are provided by residues 226–231 (NAGKSS), 245–251 (TDIAGTT), 270–273 (DTAG), 335–338 (NKAD), and 359–361 (SAR). Residue serine 230 coordinates Mg(2+). K(+) is bound by residues threonine 245, isoleucine 247, and threonine 250. Threonine 251 is a Mg(2+) binding site. Lysine 456 is a (6S)-5-formyl-5,6,7,8-tetrahydrofolate binding site.

It belongs to the TRAFAC class TrmE-Era-EngA-EngB-Septin-like GTPase superfamily. TrmE GTPase family. In terms of assembly, homodimer. Heterotetramer of two MnmE and two MnmG subunits. K(+) serves as cofactor.

The protein localises to the cytoplasm. Its function is as follows. Exhibits a very high intrinsic GTPase hydrolysis rate. Involved in the addition of a carboxymethylaminomethyl (cmnm) group at the wobble position (U34) of certain tRNAs, forming tRNA-cmnm(5)s(2)U34. The polypeptide is tRNA modification GTPase MnmE (Pseudomonas entomophila (strain L48)).